A 575-amino-acid chain; its full sequence is Mitochondrial 2-methylisocitrate lyase ICL2 (575 aa).

The active site involves Cys-238.

Belongs to the isocitrate lyase/PEP mutase superfamily. Isocitrate lyase family.

Its subcellular location is the mitochondrion matrix. The catalysed reaction is (2S,3R)-3-hydroxybutane-1,2,3-tricarboxylate = pyruvate + succinate. The protein operates within organic acid metabolism; propanoate degradation. Its function is as follows. Catalyzes the formation of pyruvate and succinate from 2-methylisocitrate during the metabolism of endogenous propionyl-CoA. Does not act on isocitrate. This is Mitochondrial 2-methylisocitrate lyase ICL2 (ICL2) from Saccharomyces cerevisiae (strain ATCC 204508 / S288c) (Baker's yeast).